Here is a 392-residue protein sequence, read N- to C-terminus: Formate-dependent phosphoribosylglycinamide formyltransferase (392 aa).

N(1)-(5-phospho-beta-D-ribosyl)glycinamide is bound by residues 22 to 23 and Glu-82; that span reads EL. ATP is bound by residues Arg-114, Lys-155, 160–165, 195–198, and Glu-203; these read SSGKGQ and EKII. Residues 119–308 enclose the ATP-grasp domain; the sequence is VLVSKKLNIL…EFALHVRSFL (190 aa). Mg(2+)-binding residues include Glu-267 and Glu-279. N(1)-(5-phospho-beta-D-ribosyl)glycinamide-binding positions include Asp-286, Lys-355, and 362–363; that span reads RR.

It belongs to the PurK/PurT family. Homodimer.

It carries out the reaction N(1)-(5-phospho-beta-D-ribosyl)glycinamide + formate + ATP = N(2)-formyl-N(1)-(5-phospho-beta-D-ribosyl)glycinamide + ADP + phosphate + H(+). The protein operates within purine metabolism; IMP biosynthesis via de novo pathway; N(2)-formyl-N(1)-(5-phospho-D-ribosyl)glycinamide from N(1)-(5-phospho-D-ribosyl)glycinamide (formate route): step 1/1. Involved in the de novo purine biosynthesis. Catalyzes the transfer of formate to 5-phospho-ribosyl-glycinamide (GAR), producing 5-phospho-ribosyl-N-formylglycinamide (FGAR). Formate is provided by PurU via hydrolysis of 10-formyl-tetrahydrofolate. The chain is Formate-dependent phosphoribosylglycinamide formyltransferase from Wigglesworthia glossinidia brevipalpis.